We begin with the raw amino-acid sequence, 38 residues long: Photosystem II reaction center protein L (38 aa).

The chain crosses the membrane as a helical span at residues 17–37 (SLFWGLLLIFVLAVLFSSYFF).

It belongs to the PsbL family. In terms of assembly, PSII is composed of 1 copy each of membrane proteins PsbA, PsbB, PsbC, PsbD, PsbE, PsbF, PsbH, PsbI, PsbJ, PsbK, PsbL, PsbM, PsbT, PsbX, PsbY, PsbZ, Psb30/Ycf12, at least 3 peripheral proteins of the oxygen-evolving complex and a large number of cofactors. It forms dimeric complexes.

It localises to the plastid. It is found in the chloroplast thylakoid membrane. Its function is as follows. One of the components of the core complex of photosystem II (PSII). PSII is a light-driven water:plastoquinone oxidoreductase that uses light energy to abstract electrons from H(2)O, generating O(2) and a proton gradient subsequently used for ATP formation. It consists of a core antenna complex that captures photons, and an electron transfer chain that converts photonic excitation into a charge separation. This subunit is found at the monomer-monomer interface and is required for correct PSII assembly and/or dimerization. The sequence is that of Photosystem II reaction center protein L from Rhodomonas salina (Cryptomonas salina).